A 101-amino-acid polypeptide reads, in one-letter code: DET1- and DDB1-associated protein 1 (101 aa).

Residues 67-101 (NAAKKRDQDQLEIGETSAPPRKIARTDSQEMSEDT) are disordered.

It belongs to the DDA1 family. In terms of assembly, component of numerous DCX (DDB1-CUL4-X-box) E3 ubiquitin-protein ligase complexes which consist of a core of DDB1, cullin-4 (CUL4A or CUL4B), DDA1 and RBX1.

The protein operates within protein modification; protein ubiquitination. Its function is as follows. Functions as a component of numerous distinct DCX (DDB1-CUL4-X-box) E3 ubiquitin-protein ligase complexes which mediate the ubiquitination and subsequent proteasomal degradation of target proteins. In the DCX complexes, acts as a scaffolding subunit required to stabilize the complex. The polypeptide is DET1- and DDB1-associated protein 1 (Xenopus tropicalis (Western clawed frog)).